A 289-amino-acid chain; its full sequence is tRNA pseudouridine synthase A (289 aa).

The Nucleophile role is filled by Asp67. Tyr125 contributes to the substrate binding site.

Belongs to the tRNA pseudouridine synthase TruA family. As to quaternary structure, homodimer.

It catalyses the reaction uridine(38/39/40) in tRNA = pseudouridine(38/39/40) in tRNA. Its function is as follows. Formation of pseudouridine at positions 38, 39 and 40 in the anticodon stem and loop of transfer RNAs. The chain is tRNA pseudouridine synthase A from Prochlorococcus marinus (strain MIT 9211).